A 115-amino-acid chain; its full sequence is Phosphoribosyl-AMP cyclohydrolase (115 aa).

Position 80 (Asp-80) interacts with Mg(2+). Cys-81 serves as a coordination point for Zn(2+). Mg(2+) is bound by residues Asp-82 and Asp-84. Zn(2+)-binding residues include Cys-97 and Cys-104.

This sequence belongs to the PRA-CH family. As to quaternary structure, homodimer. The cofactor is Mg(2+). It depends on Zn(2+) as a cofactor.

It localises to the cytoplasm. The enzyme catalyses 1-(5-phospho-beta-D-ribosyl)-5'-AMP + H2O = 1-(5-phospho-beta-D-ribosyl)-5-[(5-phospho-beta-D-ribosylamino)methylideneamino]imidazole-4-carboxamide. It participates in amino-acid biosynthesis; L-histidine biosynthesis; L-histidine from 5-phospho-alpha-D-ribose 1-diphosphate: step 3/9. In terms of biological role, catalyzes the hydrolysis of the adenine ring of phosphoribosyl-AMP. The chain is Phosphoribosyl-AMP cyclohydrolase from Mycolicibacterium smegmatis (strain ATCC 700084 / mc(2)155) (Mycobacterium smegmatis).